Here is a 216-residue protein sequence, read N- to C-terminus: Holliday junction branch migration complex subunit RuvA (216 aa).

Residues 1–64 (MISFIKGVLI…EDAQQLYGFK (64 aa)) are domain I. The interval 65–143 (SKVDKKVFQE…KMANEIYAQT (79 aa)) is domain II. The flexible linker stretch occupies residues 144 to 163 (SGTTTTSQDSQAQQAPTSAV). Residues 164–216 (LANSIFNESVDALLALGYKQKDAEKMSRSAMGDATTAAEVIRKALQGSIRSKR) are domain III.

Belongs to the RuvA family. In terms of assembly, homotetramer. Forms an RuvA(8)-RuvB(12)-Holliday junction (HJ) complex. HJ DNA is sandwiched between 2 RuvA tetramers; dsDNA enters through RuvA and exits via RuvB. An RuvB hexamer assembles on each DNA strand where it exits the tetramer. Each RuvB hexamer is contacted by two RuvA subunits (via domain III) on 2 adjacent RuvB subunits; this complex drives branch migration. In the full resolvosome a probable DNA-RuvA(4)-RuvB(12)-RuvC(2) complex forms which resolves the HJ.

The protein localises to the cytoplasm. Functionally, the RuvA-RuvB-RuvC complex processes Holliday junction (HJ) DNA during genetic recombination and DNA repair, while the RuvA-RuvB complex plays an important role in the rescue of blocked DNA replication forks via replication fork reversal (RFR). RuvA specifically binds to HJ cruciform DNA, conferring on it an open structure. The RuvB hexamer acts as an ATP-dependent pump, pulling dsDNA into and through the RuvAB complex. HJ branch migration allows RuvC to scan DNA until it finds its consensus sequence, where it cleaves and resolves the cruciform DNA. In Francisella tularensis subsp. novicida (strain U112), this protein is Holliday junction branch migration complex subunit RuvA.